The chain runs to 331 residues: Olfactory receptor 7E178 (331 aa).

Residues 1-47 (MMDRYSFIMHQHRDDTVWCPSKIEEQNITRISEFHLMGLSDDLQLQP) lie on the Extracellular side of the membrane. Residue Asn27 is glycosylated (N-linked (GlcNAc...) asparagine). A helical membrane pass occupies residues 48 to 68 (ILFGLFLSMYLVTLLGNLLII). Residues 69-80 (LTVSSDSHLHSP) are Cytoplasmic-facing. Residues 81-100 (MYFFLSNLSLADVSFTSTTL) form a helical membrane-spanning segment. At 101–119 (PKMIVDIQTHNRAISYSGC) the chain is on the extracellular side. Cys119 and Cys201 are oxidised to a cystine. A helical membrane pass occupies residues 120 to 140 (LTQMSFFMLFGCLDSLLLTAM). The Cytoplasmic portion of the chain corresponds to 141-164 (AYDRFVAICHPLHYQFIMNPRLCG). Residues 165–185 (LLVFLSVLISLFVSQLHNSVV) traverse the membrane as a helical segment. Residues 186 to 218 (LQLTYFKSVDISHFFCDPSQLLNLACSDTFTNN) are Extracellular-facing. Residues 219-239 (IVMYFVGAISGFLPISGIFFS) form a helical membrane-spanning segment. Residues 240–266 (YYKIVSSILRMPSPGGKYKAFSTCGSH) are Cytoplasmic-facing. The chain crosses the membrane as a helical span at residues 267–287 (LSVVCLFYGTGLGVYLSSAVS). Residues 288 to 293 (LSPRKG) are Extracellular-facing. Residues 294–314 (AVASIVYTVVTPMLNPFIYSL) traverse the membrane as a helical segment. Residues 315–331 (RNQDIKRAMWRLLRKTV) are Cytoplasmic-facing.

Belongs to the G-protein coupled receptor 1 family.

It localises to the cell membrane. In terms of biological role, odorant receptor. In Mus musculus (Mouse), this protein is Olfactory receptor 7E178.